A 550-amino-acid polypeptide reads, in one-letter code: Zinc finger protein 382 (550 aa).

The mediates interaction with TRIM28 stretch occupies residues 1 to 105 (MPLQGSVSFK…RHSRPLIFIN (105 aa)). 2 represses transcription regions span residues 5-46 (GSVS…FVSV) and 70-211 (IFPS…PEQP). Residues 7–78 (VSFKDVTVDF…RIFPSYSYLE (72 aa)) enclose the KRAB domain. A C2H2-type 1; degenerate zinc finger spans residues 212–234 (FDHNECEKSFLMKGMLFTHTRAH). C2H2-type zinc fingers lie at residues 296–318 (FHCP…QRIH), 324–346 (YVCN…EKTH), 352–374 (FICI…HKTH), 380–402 (YECP…QRTH), 408–430 (YQCN…QRTH), 436–458 (YICN…QRIH), 464–486 (YICN…HRIH), 492–514 (NGCP…QKTH), and 520–542 (YECK…QKTH). The segment at 296 to 550 (FHCPYCGNNF…THKVETTGIQ (255 aa)) is required for transcriptional repression activity; probably mediates sequence-specific DNA-binding.

Belongs to the krueppel C2H2-type zinc-finger protein family. As to quaternary structure, interacts with TRIM28; enhances the transcriptional repressor activity. In terms of tissue distribution, specifically expressed in heart with a weaker expression also detected in skeletal muscle.

Its subcellular location is the nucleus. Functionally, functions as a sequence-specific transcriptional repressor. This Homo sapiens (Human) protein is Zinc finger protein 382 (ZNF382).